The following is a 350-amino-acid chain: Delta(6)-protoilludene synthase STEHIDRAFT_64702 (350 aa).

Residues Asp-89, Asn-225, Ser-229, and Glu-233 each coordinate Mg(2+). The D(D/E)XX(D/E) motif signature appears at 89 to 93 (DEHSD). The NSE motif signature appears at 225-233 (NDIVSYNIE). Positions 314 and 315 each coordinate (2E,6E)-farnesyl diphosphate.

This sequence belongs to the terpene synthase family. Mg(2+) is required as a cofactor. It depends on Mn(2+) as a cofactor. The cofactor is Ca(2+). Ni(2+) serves as cofactor. Requires Co(2+) as cofactor.

It carries out the reaction (2E,6E)-farnesyl diphosphate = Delta(6)-protoilludene + diphosphate. The enzyme catalyses (2E,6E)-farnesyl diphosphate = alpha-selinene + diphosphate. Its activity is regulated as follows. Ca(2+) switches the cyclization mechanism of delta(6)-protoilludene synthase from 1,11 to 1,10 cyclization which leads to the production of beta-elemene. Terpene cyclase that catalyzes the cyclization of farnesyl diphosphate (FPP) to delta(6)-protoilludene. In presence of Ca(2+), a significant switch from 1,11 to a dual 1,11/1,10 cyclization occurs, producing beta-elemene as the major product, with lower levels of delta(6)-protoilludene and (E)-beta-caryophyllene, and traces of beta-selinene and alpha-selinene. In Stereum hirsutum (strain FP-91666) (White-rot fungus), this protein is Delta(6)-protoilludene synthase STEHIDRAFT_64702.